The following is a 511-amino-acid chain: MEKFEGYSEKHKSRQQYFVYPLLFQEYIYAFAHDYGLNGSEPVEIVSCNNKKFSSLLVKRLIIRIYQQNFWDNSVNHPNQDRLLYYKNYFYSEFYSQILSEGFAILVEIPFSLRELSCPKEKEIPKFQNLRSIHSIFPFLEDKFLHLDYLSHIEIPYPIHLEILVQLLQYRIQDVPSLHLLRFFLNYYSNSNSFITSMKSIFIFKKENKRLFRFLYNSYVSEYEFFLLFLRKQSSCLPLASSGTFLERIHFSRKMEHFWIMYPGFSRKNLWFFMDPLIHYVRYQGKAILASKGTFFLKKKWKCYHINLWQYYFRFWTQPRRIHINQLANSCFDFMGYLSSVPKSPLLVRNKMLENSFLIDTRMKKFDTIVPATLLIGYLSKAQFCTGSGHPISKPIWTDLSDWDILDRFGRICRNLFHYHSGSSKKQTLYRLKYILRLSCARTLARKHKSTVRTFMQRLGSVFLEEFFTEEEQIFCLMFTKTTLFSFSGSHTERIWYLDIIRINDLVNPLN.

It belongs to the intron maturase 2 family. MatK subfamily.

It is found in the plastid. It localises to the chloroplast. In terms of biological role, usually encoded in the trnK tRNA gene intron. Probably assists in splicing its own and other chloroplast group II introns. This Bromus inermis (Smooth brome grass) protein is Maturase K.